A 327-amino-acid polypeptide reads, in one-letter code: Urokinase plasminogen activator surface receptor (327 aa).

An N-terminal signal peptide occupies residues methionine 1–glycine 23. UPAR/Ly6 domains lie at leucine 24–leucine 117, leucine 117–glycine 212, and phenylalanine 213–glycine 298. Intrachain disulfides connect cysteine 26–cysteine 47, cysteine 29–cysteine 35, and cysteine 40–cysteine 68. A glycan (N-linked (GlcNAc...) asparagine) is linked at asparagine 32. N-linked (GlcNAc...) asparagine glycosylation is present at asparagine 75. Intrachain disulfides connect cysteine 94/cysteine 99, cysteine 119/cysteine 146, cysteine 122/cysteine 129, cysteine 139/cysteine 168, cysteine 174/cysteine 191, cysteine 192/cysteine 197, cysteine 215/cysteine 243, cysteine 218/cysteine 226, cysteine 236/cysteine 262, cysteine 268/cysteine 287, and cysteine 288/cysteine 293. 5 N-linked (GlcNAc...) asparagine glycosylation sites follow: asparagine 183, asparagine 193, asparagine 221, asparagine 254, and asparagine 282. Residue glycine 298 is the site of GPI-anchor amidated glycine attachment. Residues glycine 299–threonine 327 constitute a propeptide, removed in mature form.

As to quaternary structure, monomer. Interacts (via the UPAR/Ly6 domains) with SRPX2. Interacts with MRC2. Interacts with SORL1 (via N-terminal ectodomain); this interaction decreases PLAUR internalization. The ternary complex composed of PLAUR-PLAU-SERPINE1 also interacts with SORL1. Interacts with CD82; this interaction prevents PLAUR from binding to its high affinity ligand PLAU. Expressed in angiogenic endothelial cells (at protein level).

Its subcellular location is the cell membrane. It is found in the secreted. Acts as a receptor for urokinase plasminogen activator. Plays a role in localizing and promoting plasmin formation. Mediates the proteolysis-independent signal transduction activation effects of U-PA. The chain is Urokinase plasminogen activator surface receptor (Plaur) from Mus musculus (Mouse).